A 151-amino-acid chain; its full sequence is 3-hydroxyacyl-[acyl-carrier-protein] dehydratase FabZ (151 aa).

The active site involves H54.

Belongs to the thioester dehydratase family. FabZ subfamily. In terms of assembly, oligomer. Post-translationally, the N-terminus is blocked.

The protein localises to the cytoplasm. It catalyses the reaction a (3R)-hydroxyacyl-[ACP] = a (2E)-enoyl-[ACP] + H2O. Functionally, involved in unsaturated fatty acids biosynthesis. Catalyzes the dehydration of short chain beta-hydroxyacyl-ACPs and long chain saturated and unsaturated beta-hydroxyacyl-ACPs. This Escherichia coli (strain SE11) protein is 3-hydroxyacyl-[acyl-carrier-protein] dehydratase FabZ.